The chain runs to 369 residues: Nuclear pore complex-interacting protein family member A6 (369 aa).

The segment at 151–170 (SMKEREHGEKERQVSEAEEN) is disordered.

The protein belongs to the NPIP family.

This is Nuclear pore complex-interacting protein family member A6 from Homo sapiens (Human).